We begin with the raw amino-acid sequence, 312 residues long: Non-structural protein 12A (312 aa).

The segment covering 1–23 has biased composition (low complexity); sequence MFKSGSGSLKRSGSISSVKSFSG. 3 disordered regions span residues 1–37, 63–97, and 114–162; these read MFKS…RGSV, VPEK…YNQN, and KGRG…TGDG. The segment covering 63–73 has biased composition (basic and acidic residues); the sequence is VPEKTKSEGNL. The segment covering 74–97 has biased composition (polar residues); the sequence is KNKSSVITGNFESSGPTNAHYNQN. Positions 122 to 134 are enriched in basic and acidic residues; that stretch reads DARHTATDSRLSQ.

This sequence belongs to the phytoreovirus non-structural protein Pns12A family.

It localises to the host cytoplasm. Functionally, constituent of viral factories. In Rice dwarf virus (isolate Fujian) (RDV), this protein is Non-structural protein 12A.